We begin with the raw amino-acid sequence, 445 residues long: Argininosuccinate synthase (445 aa).

Residues 17–25 and Ala-43 each bind ATP; that span reads AFSGGLDTS. An L-citrulline-binding site is contributed by Tyr-99. Gly-129 and Thr-131 together coordinate ATP. L-aspartate-binding residues include Thr-131, Asn-135, and Asp-136. Residue Asn-135 participates in L-citrulline binding. Asp-136 provides a ligand contact to ATP. L-citrulline is bound by residues Arg-139 and Ser-192. Asp-194 contributes to the ATP binding site. Thr-201, Glu-203, and Glu-280 together coordinate L-citrulline.

Belongs to the argininosuccinate synthase family. Type 2 subfamily. Homotetramer.

Its subcellular location is the cytoplasm. It carries out the reaction L-citrulline + L-aspartate + ATP = 2-(N(omega)-L-arginino)succinate + AMP + diphosphate + H(+). Its pathway is amino-acid biosynthesis; L-arginine biosynthesis; L-arginine from L-ornithine and carbamoyl phosphate: step 2/3. This Rhodopseudomonas palustris (strain ATCC BAA-98 / CGA009) protein is Argininosuccinate synthase.